Consider the following 568-residue polypeptide: Proline--tRNA ligase (568 aa).

This sequence belongs to the class-II aminoacyl-tRNA synthetase family. ProS type 1 subfamily. As to quaternary structure, homodimer.

It is found in the cytoplasm. It carries out the reaction tRNA(Pro) + L-proline + ATP = L-prolyl-tRNA(Pro) + AMP + diphosphate. In terms of biological role, catalyzes the attachment of proline to tRNA(Pro) in a two-step reaction: proline is first activated by ATP to form Pro-AMP and then transferred to the acceptor end of tRNA(Pro). As ProRS can inadvertently accommodate and process non-cognate amino acids such as alanine and cysteine, to avoid such errors it has two additional distinct editing activities against alanine. One activity is designated as 'pretransfer' editing and involves the tRNA(Pro)-independent hydrolysis of activated Ala-AMP. The other activity is designated 'posttransfer' editing and involves deacylation of mischarged Ala-tRNA(Pro). The misacylated Cys-tRNA(Pro) is not edited by ProRS. The chain is Proline--tRNA ligase from Chromobacterium violaceum (strain ATCC 12472 / DSM 30191 / JCM 1249 / CCUG 213 / NBRC 12614 / NCIMB 9131 / NCTC 9757 / MK).